The primary structure comprises 78 residues: UPF0335 protein RrIowa_0193 (78 aa).

It belongs to the UPF0335 family.

This is UPF0335 protein RrIowa_0193 from Rickettsia rickettsii (strain Iowa).